The sequence spans 289 residues: Nodulation protein NolT (289 aa).

The N-terminal stretch at 1 to 33 (MFGSAHGDTTSSDTSGRRPLRLVVLPLLLALSS) is a signal peptide. Cys-34 is lipidated: N-palmitoyl cysteine. Residue Cys-34 is the site of S-diacylglycerol cysteine attachment. The chain crosses the membrane as a helical span at residues 233 to 253 (VAVGVSAAVFAVTCYLLFIVL).

Belongs to the YscJ lipoprotein family.

The protein resides in the cell outer membrane. This Sinorhizobium fredii (strain NBRC 101917 / NGR234) protein is Nodulation protein NolT (nolT).